Consider the following 377-residue polypeptide: Methylthioribose-1-phosphate isomerase (377 aa).

D254 functions as the Proton donor in the catalytic mechanism.

The protein belongs to the eIF-2B alpha/beta/delta subunits family. MtnA subfamily.

It localises to the cytoplasm. Its subcellular location is the nucleus. The enzyme catalyses 5-(methylsulfanyl)-alpha-D-ribose 1-phosphate = 5-(methylsulfanyl)-D-ribulose 1-phosphate. It participates in amino-acid biosynthesis; L-methionine biosynthesis via salvage pathway; L-methionine from S-methyl-5-thio-alpha-D-ribose 1-phosphate: step 1/6. Catalyzes the interconversion of methylthioribose-1-phosphate (MTR-1-P) into methylthioribulose-1-phosphate (MTRu-1-P). In Aspergillus terreus (strain NIH 2624 / FGSC A1156), this protein is Methylthioribose-1-phosphate isomerase (mri1).